A 246-amino-acid chain; its full sequence is Sortase B (246 aa).

The helical transmembrane segment at 5–24 threads the bilayer; sequence SFLGKSLTLVVLGVFLFSGW.

Belongs to the bacterial sortase family. Class B subfamily.

It localises to the cell membrane. Functionally, transpeptidase that anchors surface proteins to the cell wall. Recognizes and modifies its substrate by proteolytic cleavage of a C-terminal sorting signal. Following cleavage, a covalent intermediate is formed via a thioester bond between the sortase and its substrate, which is then transferred and covalently attached to the cell wall. Catalyzes a cell wall sorting reaction in which a surface protein with the consensus sorting signal NP(Q/K)(T/S)(N/G/S)(D/A) is cleaved between the fourth and fifth residues, and the fourth position is linked to the cell wall. This is not the major sortase in Listeria, it seems to anchor only 2 proteins, Hbp2 (SvpA) and Hbp1. The chain is Sortase B from Listeria monocytogenes serovar 1/2a (strain ATCC BAA-679 / EGD-e).